Reading from the N-terminus, the 402-residue chain is O-glucosyltransferase rumi homolog (402 aa).

The first 20 residues, 1–20 (MPYLEIVLALLVLSFQLGHS), serve as a signal peptide directing secretion. Disulfide bonds link Cys-67-Cys-74, Cys-72-Cys-375, Cys-118-Cys-124, and Cys-279-Cys-302. Asn-71 carries an N-linked (GlcNAc...) asparagine glycan. The active-site Proton donor/acceptor is the Asp-149. The interval 189 to 194 (AISLYP) is interaction with the consensus sequence C-X-S-X-[PA]-C in peptide substrates. Residues 226-230 (RGSRT), Arg-234, 273-275 (VRL), and 291-295 (AASFR) each bind UDP-alpha-D-glucose.

It belongs to the glycosyltransferase 90 family.

It is found in the endoplasmic reticulum lumen. The protein resides in the secreted. It functions in the pathway protein modification; protein glycosylation. In terms of biological role, protein O-glucosyltransferase. Catalyzes the reaction that attaches glucose through an O-glycosidic linkage to a conserved serine residue found in the consensus sequence C-X-S-X-[PA]-C in epidermal growth factor-like repeats. Regulates Notch signaling by glucosylating Notch in the ER, glucosylation is required for the correct folding and cleavage of Notch. The sequence is that of O-glucosyltransferase rumi homolog from Aedes aegypti (Yellowfever mosquito).